The sequence spans 182 residues: uncharacterized protein (182 aa).

The next 4 helical transmembrane spans lie at 19-39 (LFGI…SIVS), 51-71 (IYLV…VVFI), 87-107 (IFTV…IELF), and 118-138 (CSPF…LAMC).

The protein resides in the membrane. This is an uncharacterized protein from Caenorhabditis elegans.